The following is a 335-amino-acid chain: F420-dependent glucose-6-phosphate dehydrogenase 1 (335 aa).

Asp38 contributes to the coenzyme F420-(gamma-Glu)n binding site. His39 functions as the Proton donor in the catalytic mechanism. Coenzyme F420-(gamma-Glu)n is bound by residues Thr75 and 106-107 (TG). The Proton acceptor role is filled by Glu108. Coenzyme F420-(gamma-Glu)n is bound by residues Asn111, 176 to 177 (GG), and 179 to 180 (VV). Substrate is bound by residues Thr194, Lys197, Lys258, and Arg282.

It belongs to the F420-dependent glucose-6-phosphate dehydrogenase family. In terms of assembly, homodimer.

The catalysed reaction is oxidized coenzyme F420-(gamma-L-Glu)(n) + D-glucose 6-phosphate + H(+) = 6-phospho-D-glucono-1,5-lactone + reduced coenzyme F420-(gamma-L-Glu)(n). In terms of biological role, catalyzes the coenzyme F420-dependent oxidation of glucose 6-phosphate (G6P) to 6-phosphogluconolactone. In Rhodococcus jostii (strain RHA1), this protein is F420-dependent glucose-6-phosphate dehydrogenase 1.